Here is a 150-residue protein sequence, read N- to C-terminus: Nascent polypeptide-associated complex subunit beta (150 aa).

2 disordered regions span residues 1-45 (MADV…LQQS) and 123-150 (YQNMQQKKDDDDEIPDLVAGESFENKVE). Residues 23–32 (TPRRKVKRAP) are compositionally biased toward basic residues. One can recognise an NAC-A/B domain in the interval 36–101 (GADDKKLQQS…GEDKELTELV (66 aa)).

The protein belongs to the NAC-beta family. As to quaternary structure, part of the nascent polypeptide-associated complex (NAC), consisting of EGD2 and EGD1. NAC associates with ribosomes via EGD1.

The protein localises to the cytoplasm. Its subcellular location is the nucleus. In terms of biological role, component of the nascent polypeptide-associated complex (NAC), a dynamic component of the ribosomal exit tunnel, protecting the emerging polypeptides from interaction with other cytoplasmic proteins to ensure appropriate nascent protein targeting. The NAC complex also promotes mitochondrial protein import by enhancing productive ribosome interactions with the outer mitochondrial membrane and blocks the inappropriate interaction of ribosomes translating non-secretory nascent polypeptides with translocation sites in the membrane of the endoplasmic reticulum. EGD1 may act as a transcription factor that exert a negative effect on the expression of several genes that are transcribed by RNA polymerase II. This Chaetomium globosum (strain ATCC 6205 / CBS 148.51 / DSM 1962 / NBRC 6347 / NRRL 1970) (Soil fungus) protein is Nascent polypeptide-associated complex subunit beta (EGD1).